The chain runs to 199 residues: 7-methyl-GTP pyrophosphatase (199 aa).

Residue D76 is the Proton acceptor of the active site.

This sequence belongs to the Maf family. YceF subfamily. It depends on a divalent metal cation as a cofactor.

The protein localises to the cytoplasm. It carries out the reaction N(7)-methyl-GTP + H2O = N(7)-methyl-GMP + diphosphate + H(+). Functionally, nucleoside triphosphate pyrophosphatase that hydrolyzes 7-methyl-GTP (m(7)GTP). May have a dual role in cell division arrest and in preventing the incorporation of modified nucleotides into cellular nucleic acids. In Nitrosococcus oceani (strain ATCC 19707 / BCRC 17464 / JCM 30415 / NCIMB 11848 / C-107), this protein is 7-methyl-GTP pyrophosphatase.